The chain runs to 222 residues: Riboflavin kinase (222 aa).

Residues 1–92 form a unknown region; it reads MVEAEDLQSL…VRIFNPDQRG (92 aa). The tract at residues 93 to 222 is riboflavin kinase; sequence YTLTGTVISG…DTIEVEITHD (130 aa). Position 102 to 107 (102 to 107) interacts with CDP; that stretch reads GLGEGR. Residues threonine 131 and asparagine 133 each contribute to the Mg(2+) site. Positions 188 and 196 each coordinate FMN. Position 201–204 (201–204) interacts with CDP; that stretch reads CELR.

The protein belongs to the archaeal riboflavin kinase family. The cofactor is Mg(2+).

The catalysed reaction is riboflavin + CTP = CDP + FMN + H(+). The protein operates within cofactor biosynthesis; FMN biosynthesis; FMN from riboflavin (CTP route): step 1/1. Catalyzes the CTP-dependent phosphorylation of riboflavin (vitamin B2) to form flavin mononucleotide (FMN). This Methanoculleus marisnigri (strain ATCC 35101 / DSM 1498 / JR1) protein is Riboflavin kinase (ribK).